A 495-amino-acid chain; its full sequence is Chromosomal replication initiator protein DnaA (495 aa).

Residues 1–83 form a domain I, interacts with DnaA modulators region; sequence MSVALWQQCL…KVQLTVGSRR (83 aa). The domain II stretch occupies residues 83–158; the sequence is RNVAMSSPRD…QVEGSLKHQS (76 aa). The tract at residues 86-127 is disordered; it reads AMSSPRDLGAPVSATTMNASRPTEAPAVHAAPRAKGDYADEQ. The interval 159–375 is domain III, AAA+ region; it reads GLNPNFTFET…GALKKVIADS (217 aa). ATP-binding residues include Gly-203, Gly-205, Lys-206, and Thr-207. The domain IV, binds dsDNA stretch occupies residues 376–495; the sequence is HFMGKPITQD…YKNLLRLLTS (120 aa).

This sequence belongs to the DnaA family. Oligomerizes as a right-handed, spiral filament on DNA at oriC.

The protein resides in the cytoplasm. In terms of biological role, plays an essential role in the initiation and regulation of chromosomal replication. ATP-DnaA binds to the origin of replication (oriC) to initiate formation of the DNA replication initiation complex once per cell cycle. Binds the DnaA box (a 9 base pair repeat at the origin) and separates the double-stranded (ds)DNA. Forms a right-handed helical filament on oriC DNA; dsDNA binds to the exterior of the filament while single-stranded (ss)DNA is stabiized in the filament's interior. The ATP-DnaA-oriC complex binds and stabilizes one strand of the AT-rich DNA unwinding element (DUE), permitting loading of DNA polymerase. After initiation quickly degrades to an ADP-DnaA complex that is not apt for DNA replication. Binds acidic phospholipids. The protein is Chromosomal replication initiator protein DnaA of Chromohalobacter salexigens (strain ATCC BAA-138 / DSM 3043 / CIP 106854 / NCIMB 13768 / 1H11).